A 379-amino-acid polypeptide reads, in one-letter code: Carboxypeptidase Y-deficient protein 8 (379 aa).

Low complexity predominate over residues 84-107 (HGSGNSSSKKVTSSTSSSSSNGSV). The interval 84 to 108 (HGSGNSSSKKVTSSTSSSSSNGSVD) is disordered. Ser216 carries the post-translational modification Phosphoserine.

It belongs to the VPS26 family. Component of the retromer complex which consists of VPS29, VPS26, VPS35, VPS5 and VPS17. Component of a retromer subcomplex consisting of VPS29, VPS26 and VPS35.

Plays a role in vesicular protein sorting. Required for the endosome-to-Golgi retrieval of the vacuolar protein sorting receptor VPS10. Component of the membrane-associated retromer complex which is essential in endosome-to-Golgi retrograde transport. The VPS29-VPS26-VPS35 subcomplex may be involved in cargo selection. This Saccharomyces cerevisiae (strain ATCC 204508 / S288c) (Baker's yeast) protein is Carboxypeptidase Y-deficient protein 8 (PEP8).